Reading from the N-terminus, the 665-residue chain is E3 ubiquitin-protein ligase cblA (665 aa).

Residues 30–50 (NNNNNINNNNNNNNINSNNNG) form a disordered region. A 4H region spans residues 109 to 231 (TSLVNYIHYE…NNENNNNNNN (123 aa)). The region spanning 109–400 (TSLVNYIHYE…PDIFKSILSF (292 aa)) is the Cbl-PTB domain. The interval 232 to 306 (NYNPYELLSN…FKLSVFIKWF (75 aa)) is EF-hand-like. Residues Asp287, Thr289, Asp291, and Tyr293 each contribute to the Ca(2+) site. The SH2-like stretch occupies residues 307–400 (GALPVSLGIF…PDIFKSILSF (94 aa)). Disordered regions lie at residues 437–456 (ENNNNQNNNQNNNNNNINTF) and 467–609 (DSSN…NNNN). Over residues 467–478 (DSSNSSDTNKSP) the composition is skewed to low complexity. Residues 479 to 544 (TKSRKSSFKN…NNNNNNNNNN (66 aa)) are a coiled coil. The span at 486 to 512 (FKNDKDKKEKEKEKGKDKEKEKERVSD) shows a compositional bias: basic and acidic residues. Composition is skewed to low complexity over residues 530–561 (NNNNNNNNNNNNNNNNNNNNNNNNNNSSNNNN) and 571–609 (TSNGSSGNNNNNNNNNNNNNNNNNNNNSSSTTKRNNNNN). The RING-type zinc finger occupies 618-653 (CTVCMDNEINTVFLECGHLSCCSLCSVKLKKCPICR).

Post-translationally, ubiquitinated.

It localises to the cytoplasm. The protein resides in the nucleus. The enzyme catalyses S-ubiquitinyl-[E2 ubiquitin-conjugating enzyme]-L-cysteine + [acceptor protein]-L-lysine = [E2 ubiquitin-conjugating enzyme]-L-cysteine + N(6)-ubiquitinyl-[acceptor protein]-L-lysine.. It participates in protein modification; protein ubiquitination. Functionally, acts as an E3 ubiquitin-protein ligase, which accepts ubiquitin from specific E2 ubiquitin-conjugating enzymes, and then transfers it to substrates promoting their degradation by the proteasome. Up-regulates STATc tyrosine phosphorylation via an inhibitory effect on ptpC accumulation. Recognizes activated receptor tyrosine kinases, RTKs and terminates signaling. This Dictyostelium discoideum (Social amoeba) protein is E3 ubiquitin-protein ligase cblA (cblA-1).